We begin with the raw amino-acid sequence, 510 residues long: Maturase K (510 aa).

It belongs to the intron maturase 2 family. MatK subfamily.

It localises to the plastid. It is found in the chloroplast. Its function is as follows. Usually encoded in the trnK tRNA gene intron. Probably assists in splicing its own and other chloroplast group II introns. This chain is Maturase K, found in Anomochloa marantoidea (Herbaceous bamboo).